Reading from the N-terminus, the 550-residue chain is MSNYAPFIKPYVEYNEHGWGPCEVPELDVPYQPFCKSDRLGKICDWTAMVPEKKFPSKYASTFGNNSQYAYFYEDDDSTFHLVDTTGSKATKPYQRGRYRTNMRNNVRTRGRTGRGTPNIASLGGSTAGGATASTTKYGKGRHTRNTQNVGRRFGRNAPTRIRESSVMVQSNWVSIEEIDFPRLLKLALPNIKEGKDIATCGSLEFYDKLYDRVNLRNEKPLQKMARVVHTVTTTDDPVIRRLSRTMGNVFATDEILSTIMCCTRSNYSWDVVVEKLGTKVFLDKRYNDQFDLLTVNETSVEPPMEEEGSINSAHSLAMEATLINHNFSQQVLRIGDQEQRFMFEEPNPFEEPGVDLASIGYRYRQWDLGNDVVLIARCKHNAVIQGPNGDMQFLSIKALNEWDSKVTNSVEWRQKLDTQRGAVLASELRNNACKLARWTVEAVLAGSDQLKLGYVSRMNPRDHLRHVILGTQQFKPQEFATQINLNMDNSWGVLRCLIDLVMKQPDGKYLIMKDPNKPMIRLYDVPENAFDSDRDEEESSEPLSNSNDN.

Residues 108–152 are disordered; the sequence is RTRGRTGRGTPNIASLGGSTAGGATASTTKYGKGRHTRNTQNVGR. Positions 115-136 are enriched in low complexity; that stretch reads RGTPNIASLGGSTAGGATASTT. The segment at 290–304 is RNA gate; sequence QFDLLTVNETSVEPP. A disordered region spans residues 527–550; that stretch reads PENAFDSDRDEEESSEPLSNSNDN.

It belongs to the eIF-3 subunit D family. As to quaternary structure, component of the eukaryotic translation initiation factor 3 (eIF-3) complex. The eIF-3 complex interacts with pix.

The protein resides in the cytoplasm. Its function is as follows. mRNA cap-binding component of the eukaryotic translation initiation factor 3 (eIF-3) complex, which is involved in protein synthesis of a specialized repertoire of mRNAs and, together with other initiation factors, stimulates binding of mRNA and methionyl-tRNAi to the 40S ribosome. The eIF-3 complex specifically targets and initiates translation of a subset of mRNAs involved in cell proliferation. In the eIF-3 complex, eif3d specifically recognizes and binds the 7-methylguanosine cap of a subset of mRNAs. This is Eukaryotic translation initiation factor 3 subunit D-2 from Drosophila sechellia (Fruit fly).